Consider the following 195-residue polypeptide: Molybdenum cofactor guanylyltransferase (195 aa).

GTP is bound by residues 10–12 (LAG), lysine 23, asparagine 51, aspartate 69, and aspartate 99. Aspartate 99 is a binding site for Mg(2+).

Belongs to the MobA family. As to quaternary structure, monomer. It depends on Mg(2+) as a cofactor.

Its subcellular location is the cytoplasm. The enzyme catalyses Mo-molybdopterin + GTP + H(+) = Mo-molybdopterin guanine dinucleotide + diphosphate. In terms of biological role, transfers a GMP moiety from GTP to Mo-molybdopterin (Mo-MPT) cofactor (Moco or molybdenum cofactor) to form Mo-molybdopterin guanine dinucleotide (Mo-MGD) cofactor. The protein is Molybdenum cofactor guanylyltransferase of Yersinia pseudotuberculosis serotype O:1b (strain IP 31758).